Consider the following 215-residue polypeptide: Small ribosomal subunit protein uS5 (215 aa).

A compositionally biased stretch (gly residues) spans 1–12 (MSGTQRRGGGAG). The disordered stretch occupies residues 1–31 (MSGTQRRGGGAGGERRGRDNRRGQNDRNRNQ). Over residues 13 to 31 (GERRGRDNRRGQNDRNRNQ) the composition is skewed to basic and acidic residues. Positions 34-97 (YLERVVAINR…EEAKKHFFKV (64 aa)) constitute an S5 DRBM domain.

Belongs to the universal ribosomal protein uS5 family. As to quaternary structure, part of the 30S ribosomal subunit. Contacts proteins S4 and S8.

In terms of biological role, with S4 and S12 plays an important role in translational accuracy. Its function is as follows. Located at the back of the 30S subunit body where it stabilizes the conformation of the head with respect to the body. The protein is Small ribosomal subunit protein uS5 of Cutibacterium acnes (strain DSM 16379 / KPA171202) (Propionibacterium acnes).